Here is a 200-residue protein sequence, read N- to C-terminus: Putative 3-methyladenine DNA glycosylase (200 aa).

The protein belongs to the DNA glycosylase MPG family.

This Bradyrhizobium diazoefficiens (strain JCM 10833 / BCRC 13528 / IAM 13628 / NBRC 14792 / USDA 110) protein is Putative 3-methyladenine DNA glycosylase.